We begin with the raw amino-acid sequence, 301 residues long: Protein SCO1 homolog, mitochondrial (301 aa).

Residues methionine 1 to leucine 67 constitute a mitochondrion transit peptide. The disordered stretch occupies residues glycine 63–glycine 91. Residues serine 68–proline 92 lie on the Mitochondrial matrix side of the membrane. A helical transmembrane segment spans residues valine 93 to glycine 111. Residues methionine 112 to serine 301 are Mitochondrial intermembrane-facing. The tract at residues glutamate 118–isoleucine 131 is important for dimerization. 3 residues coordinate Cu cation: cysteine 169, cysteine 173, and histidine 260. A disulfide bridge connects residues cysteine 169 and cysteine 173.

It belongs to the SCO1/2 family. In terms of assembly, homodimer. Interacts with COA6. Found in a complex with TMEM177, COX20, COA6, MT-CO2/COX2, COX18 and SCO2. Interacts with TMEM177 in a COX20-dependent manner. Interacts with COX20 in a MT-CO2/COX2- and COX18-dependent manner. Interacts with COX16. In terms of tissue distribution, predominantly expressed in tissues characterized by high rates of oxidative phosphorylation (OxPhos), including muscle, heart, and brain.

The protein localises to the mitochondrion. The protein resides in the mitochondrion inner membrane. Copper metallochaperone essential for the maturation of cytochrome c oxidase subunit II (MT-CO2/COX2). Not required for the synthesis of MT-CO2/COX2 but plays a crucial role in stabilizing MT-CO2/COX2 during its subsequent maturation. Involved in transporting copper to the Cu(A) site on MT-CO2/COX2. Plays an important role in the regulation of copper homeostasis by controlling the abundance and cell membrane localization of copper transporter CTR1. The chain is Protein SCO1 homolog, mitochondrial (SCO1) from Homo sapiens (Human).